The chain runs to 188 residues: MKAQTTSKDSLILRQEVVGARRPSNYFWAVIVSIGGLGFLLAGLSSYLKVNLLLVSDTSALQFIPQGVALLFYGTAGTLLAIYLWLSLLWNVGGGYNEFNKETGKVKIFRWGYPGKNRRIDLDWPLEDAQAVRAEVREGLNPKRELFLRIKQRRDIPLTRVGDPMSLSELENQGAELARFLEIPLEGL.

A run of 2 helical transmembrane segments spans residues 26 to 46 (YFWA…GLSS) and 70 to 90 (LLFY…SLLW).

This sequence belongs to the Ycf4 family.

It localises to the cellular thylakoid membrane. Functionally, seems to be required for the assembly of the photosystem I complex. The chain is Photosystem I assembly protein Ycf4 from Microcystis aeruginosa (strain NIES-843 / IAM M-2473).